The sequence spans 375 residues: Succinyl-diaminopimelate desuccinylase (375 aa).

Zn(2+) is bound at residue H75. Residue D77 is part of the active site. Residue D106 coordinates Zn(2+). E136 serves as the catalytic Proton acceptor. Zn(2+) is bound by residues E137, E165, and H348.

This sequence belongs to the peptidase M20A family. DapE subfamily. Homodimer. The cofactor is Zn(2+). It depends on Co(2+) as a cofactor.

It catalyses the reaction N-succinyl-(2S,6S)-2,6-diaminopimelate + H2O = (2S,6S)-2,6-diaminopimelate + succinate. Its pathway is amino-acid biosynthesis; L-lysine biosynthesis via DAP pathway; LL-2,6-diaminopimelate from (S)-tetrahydrodipicolinate (succinylase route): step 3/3. Functionally, catalyzes the hydrolysis of N-succinyl-L,L-diaminopimelic acid (SDAP), forming succinate and LL-2,6-diaminopimelate (DAP), an intermediate involved in the bacterial biosynthesis of lysine and meso-diaminopimelic acid, an essential component of bacterial cell walls. In Novosphingobium aromaticivorans (strain ATCC 700278 / DSM 12444 / CCUG 56034 / CIP 105152 / NBRC 16084 / F199), this protein is Succinyl-diaminopimelate desuccinylase.